A 263-amino-acid polypeptide reads, in one-letter code: Aminoglycoside 3'-phosphotransferase (263 aa).

The active-site Proton acceptor is aspartate 189.

It belongs to the aminoglycoside phosphotransferase family.

It carries out the reaction kanamycin A + ATP = kanamycin 3'-phosphate + ADP + H(+). Resistance to kanamycin and structurally-related aminoglycosides, including amikacin. This Staphylococcus aureus protein is Aminoglycoside 3'-phosphotransferase (aphA).